The following is a 347-amino-acid chain: Ribosomal RNA small subunit methyltransferase C (347 aa).

It belongs to the methyltransferase superfamily. RsmC family. Monomer.

The protein resides in the cytoplasm. It catalyses the reaction guanosine(1207) in 16S rRNA + S-adenosyl-L-methionine = N(2)-methylguanosine(1207) in 16S rRNA + S-adenosyl-L-homocysteine + H(+). Functionally, specifically methylates the guanine in position 1207 of 16S rRNA in the 30S particle. This is Ribosomal RNA small subunit methyltransferase C from Yersinia pseudotuberculosis serotype O:1b (strain IP 31758).